We begin with the raw amino-acid sequence, 931 residues long: Translation initiation factor IF-2 (931 aa).

Positions 32-310 are disordered; it reads KSASSTVEPP…SSKARKNRLA (279 aa). Residues 50-59 are compositionally biased toward polar residues; it reads FASSGQGNAS. Positions 82-96 are enriched in pro residues; it reads PAAPSAPKPAAPAAP. Residues 156-168 show a composition bias toward low complexity; the sequence is GNAPQGGNNANGA. Gly residues-rich tracts occupy residues 217-238, 248-271, and 281-298; these read RPGQGGGQRGGFRGRPGQGGAK, GQGGGQRPAGGGNRFGGNGGGFQG, and ARGGRGRGGAAGAFGRQG. Residues 424–596 form the tr-type G domain; that stretch reads PRPPVVTVMG…VLLTADAELD (173 aa). Positions 433 to 440 are G1; it reads GHVDHGKT. 433 to 440 lines the GTP pocket; the sequence is GHVDHGKT. The segment at 458 to 462 is G2; sequence GITQR. Positions 483–486 are G3; it reads DTPG. GTP is bound by residues 483–487 and 537–540; these read DTPGH and NKID. A G4 region spans residues 537 to 540; sequence NKID. The interval 573-575 is G5; the sequence is SAK.

The protein belongs to the TRAFAC class translation factor GTPase superfamily. Classic translation factor GTPase family. IF-2 subfamily.

Its subcellular location is the cytoplasm. In terms of biological role, one of the essential components for the initiation of protein synthesis. Protects formylmethionyl-tRNA from spontaneous hydrolysis and promotes its binding to the 30S ribosomal subunits. Also involved in the hydrolysis of GTP during the formation of the 70S ribosomal complex. This Bifidobacterium adolescentis (strain ATCC 15703 / DSM 20083 / NCTC 11814 / E194a) protein is Translation initiation factor IF-2.